The sequence spans 426 residues: Serine--tRNA ligase (426 aa).

233 to 235 (TAE) contributes to the L-serine binding site. An ATP-binding site is contributed by 264–266 (RSE). Glu287 is an L-serine binding site. 351-354 (EISS) is a binding site for ATP. Ser387 provides a ligand contact to L-serine.

It belongs to the class-II aminoacyl-tRNA synthetase family. Type-1 seryl-tRNA synthetase subfamily. Homodimer. The tRNA molecule binds across the dimer.

It localises to the cytoplasm. It carries out the reaction tRNA(Ser) + L-serine + ATP = L-seryl-tRNA(Ser) + AMP + diphosphate + H(+). It catalyses the reaction tRNA(Sec) + L-serine + ATP = L-seryl-tRNA(Sec) + AMP + diphosphate + H(+). It functions in the pathway aminoacyl-tRNA biosynthesis; selenocysteinyl-tRNA(Sec) biosynthesis; L-seryl-tRNA(Sec) from L-serine and tRNA(Sec): step 1/1. Functionally, catalyzes the attachment of serine to tRNA(Ser). Is also able to aminoacylate tRNA(Sec) with serine, to form the misacylated tRNA L-seryl-tRNA(Sec), which will be further converted into selenocysteinyl-tRNA(Sec). The chain is Serine--tRNA ligase from Ectopseudomonas mendocina (strain ymp) (Pseudomonas mendocina).